Here is a 207-residue protein sequence, read N- to C-terminus: Ribosomal RNA small subunit methyltransferase G (207 aa).

S-adenosyl-L-methionine-binding positions include glycine 73, leucine 78, valine 124–glutamate 125, and arginine 139.

It belongs to the methyltransferase superfamily. RNA methyltransferase RsmG family.

It localises to the cytoplasm. The catalysed reaction is guanosine(527) in 16S rRNA + S-adenosyl-L-methionine = N(7)-methylguanosine(527) in 16S rRNA + S-adenosyl-L-homocysteine. Its function is as follows. Specifically methylates the N7 position of guanine in position 527 of 16S rRNA. The chain is Ribosomal RNA small subunit methyltransferase G from Escherichia fergusonii (strain ATCC 35469 / DSM 13698 / CCUG 18766 / IAM 14443 / JCM 21226 / LMG 7866 / NBRC 102419 / NCTC 12128 / CDC 0568-73).